Consider the following 273-residue polypeptide: MSTIRPVFYVSDGTGITAETIGHSLLTQFSGFNFVTDRMSFIDDADKARDAAMRVRAAGERYQVRPVVVNSCVDPQLSMILAESGALMLDVFAPFIEPLERELNAPRHSRVGRAHGMVDFETYHRRINAMNFALSHDDGIALNYDEADVILVAVSRAGKTPTCIYLALHYGIRAANYPLTDEDLENEQLPPRLRNYRSKLFGLTIDPERLQQIRQERRANSRYSAAETCRREVAIAERMFQMERIPSLSTTNTSIEEISSKVLSTLGLQREMF.

153–160 is an ADP binding site; sequence AVSRAGKT.

Belongs to the pyruvate, phosphate/water dikinase regulatory protein family. PSRP subfamily.

It catalyses the reaction [pyruvate, water dikinase] + ADP = [pyruvate, water dikinase]-phosphate + AMP + H(+). It carries out the reaction [pyruvate, water dikinase]-phosphate + phosphate + H(+) = [pyruvate, water dikinase] + diphosphate. Bifunctional serine/threonine kinase and phosphorylase involved in the regulation of the phosphoenolpyruvate synthase (PEPS) by catalyzing its phosphorylation/dephosphorylation. In Xanthomonas axonopodis pv. citri (strain 306), this protein is Putative phosphoenolpyruvate synthase regulatory protein.